The following is a 260-amino-acid chain: Dolichol-phosphate mannosyltransferase subunit 1 (260 aa).

The segment at 1-20 (MAAEEASRSSPRFRREPKGR) is disordered. N-acetylalanine is present on Ala2. Ser9 is subject to Phosphoserine. 11 residues coordinate GDP-alpha-D-mannose: Pro32, Tyr34, Glu36, Ile63, Asp65, Asp118, Ala119, Asp120, Arg147, Arg234, and Lys240. Asp120 serves as a coordination point for Mg(2+). Residue Asp120 coordinates Mn(2+).

This sequence belongs to the glycosyltransferase 2 family. In terms of assembly, component of the dolichol-phosphate mannose (DPM) synthase complex composed of DPM1, DPM2 and DPM3; within the complex, directly interacts with DPM3. This interaction may stabilize DPM1. Mg(2+) serves as cofactor. Mn(2+) is required as a cofactor. It depends on Ca(2+) as a cofactor.

The protein localises to the endoplasmic reticulum. It catalyses the reaction a di-trans,poly-cis-dolichyl phosphate + GDP-alpha-D-mannose = a di-trans,poly-cis-dolichyl beta-D-mannosyl phosphate + GDP. Its pathway is protein modification; protein glycosylation. Transfers mannose from GDP-mannose to dolichol monophosphate to form dolichol phosphate mannose (Dol-P-Man) which is the mannosyl donor in pathways leading to N-glycosylation, glycosyl phosphatidylinositol membrane anchoring, and O-mannosylation of proteins; catalytic subunit of the dolichol-phosphate mannose (DPM) synthase complex. This is Dolichol-phosphate mannosyltransferase subunit 1 (DPM1) from Bos taurus (Bovine).